The chain runs to 330 residues: Beta-ketoacyl-[acyl-carrier-protein] synthase III (330 aa).

Catalysis depends on residues cysteine 111 and histidine 249. The interval 250–254 is ACP-binding; that stretch reads QANTR. The active site involves asparagine 279.

The protein belongs to the thiolase-like superfamily. FabH family. As to quaternary structure, homodimer.

The protein localises to the cytoplasm. The catalysed reaction is malonyl-[ACP] + acetyl-CoA + H(+) = 3-oxobutanoyl-[ACP] + CO2 + CoA. It functions in the pathway lipid metabolism; fatty acid biosynthesis. Catalyzes the condensation reaction of fatty acid synthesis by the addition to an acyl acceptor of two carbons from malonyl-ACP. Catalyzes the first condensation reaction which initiates fatty acid synthesis and may therefore play a role in governing the total rate of fatty acid production. Possesses both acetoacetyl-ACP synthase and acetyl transacylase activities. Its substrate specificity determines the biosynthesis of branched-chain and/or straight-chain of fatty acids. This chain is Beta-ketoacyl-[acyl-carrier-protein] synthase III, found in Pseudomonas aeruginosa (strain LESB58).